The following is a 234-amino-acid chain: MSKHGFGYYATEANEYTIPLDDIDDGRSDTDAKTLGSVLTQLSEEVDWDDAVDYATMSSYLGDYVFTIPNSYDIHPKFTRYVVLFGLSTFVLRPSCCLIFLFYAIYAQDNRFLILGTTITAFFYGTLMLEMYYMYANIKYDLMPLSKFQQVLIGALSMLGPIIFVAISYNMIFKDVTFMKKILAFDTNLKTSGFVIYLVMIASLAYSITSISDAIGFLLPRLWTRAVLKSCVPF.

The next 4 helical transmembrane spans lie at 82-102 (VVLF…IFLF), 112-132 (FLIL…LEMY), 153-173 (IGAL…NMIF), and 191-211 (TSGF…ITSI).

It belongs to the alphaherpesvirinae UL20 family. In terms of assembly, interacts with gK (via N-terminus); this interaction plays a role in the coordinate transport of UL20 and gK to the trans-Golgi network (TGN), and is required for their cell surface expression. Interacts with gB.

It is found in the virion. The protein resides in the host cell membrane. The protein localises to the host endosome membrane. Its subcellular location is the host Golgi apparatus membrane. It localises to the host nucleus membrane. Plays an essential role in egress of virus particles from the nucleus, cytoplasmic envelopment and virus-induced cell fusion. Forms a functional protein complex with gK and this interaction is absolutely essential for their coordinate intracellular transport, gK glycosylation, expression on host cell surface, and function. Together, they modulate gB-mediated virus-induced cell fusion and virion egress and therefore actively participate in these processes. The chain is Protein UL20 homolog (MDV032) from Gallid herpesvirus 2 (strain Chicken/Md5/ATCC VR-987) (GaHV-2).